The sequence spans 128 residues: Ribonuclease P protein component (128 aa).

The protein belongs to the RnpA family. Consists of a catalytic RNA component (M1 or rnpB) and a protein subunit.

It catalyses the reaction Endonucleolytic cleavage of RNA, removing 5'-extranucleotides from tRNA precursor.. RNaseP catalyzes the removal of the 5'-leader sequence from pre-tRNA to produce the mature 5'-terminus. It can also cleave other RNA substrates such as 4.5S RNA. The protein component plays an auxiliary but essential role in vivo by binding to the 5'-leader sequence and broadening the substrate specificity of the ribozyme. The sequence is that of Ribonuclease P protein component from Prochlorococcus marinus (strain MIT 9312).